A 157-amino-acid polypeptide reads, in one-letter code: Crossover junction endodeoxyribonuclease RuvC (157 aa).

Residues D7, E67, and D139 contribute to the active site. Mg(2+) is bound by residues D7, E67, and D139.

The protein belongs to the RuvC family. Homodimer which binds Holliday junction (HJ) DNA. The HJ becomes 2-fold symmetrical on binding to RuvC with unstacked arms; it has a different conformation from HJ DNA in complex with RuvA. In the full resolvosome a probable DNA-RuvA(4)-RuvB(12)-RuvC(2) complex forms which resolves the HJ. Mg(2+) is required as a cofactor.

The protein resides in the cytoplasm. It carries out the reaction Endonucleolytic cleavage at a junction such as a reciprocal single-stranded crossover between two homologous DNA duplexes (Holliday junction).. The RuvA-RuvB-RuvC complex processes Holliday junction (HJ) DNA during genetic recombination and DNA repair. Endonuclease that resolves HJ intermediates. Cleaves cruciform DNA by making single-stranded nicks across the HJ at symmetrical positions within the homologous arms, yielding a 5'-phosphate and a 3'-hydroxyl group; requires a central core of homology in the junction. The consensus cleavage sequence is 5'-(A/T)TT(C/G)-3'. Cleavage occurs on the 3'-side of the TT dinucleotide at the point of strand exchange. HJ branch migration catalyzed by RuvA-RuvB allows RuvC to scan DNA until it finds its consensus sequence, where it cleaves and resolves the cruciform DNA. In Prochlorococcus marinus subsp. pastoris (strain CCMP1986 / NIES-2087 / MED4), this protein is Crossover junction endodeoxyribonuclease RuvC.